Reading from the N-terminus, the 208-residue chain is Cytochrome c oxidase assembly protein CtaG (208 aa).

The Cytoplasmic portion of the chain corresponds to 1–19 (MKQRPTGPDTTPRNRRGFG). A helical; Signal-anchor for type II membrane protein transmembrane segment spans residues 20–42 (RDTAVASVCGLVVALMVGASYAA). At 43–208 (VPFYNWFCRV…SEAGPRQGAL (166 aa)) the chain is on the periplasmic side.

It belongs to the COX11/CtaG family.

It is found in the cell inner membrane. Exerts its effect at some terminal stage of cytochrome c oxidase synthesis, probably by being involved in the insertion of the copper B into subunit I. The protein is Cytochrome c oxidase assembly protein CtaG of Rhodopseudomonas palustris (strain BisA53).